The following is a 371-amino-acid chain: 3-dehydroquinate synthase (371 aa).

NAD(+) is bound by residues 70-75, 104-108, 128-129, Lys-141, and Lys-150; these read DAEDGK, GAVTD, and TT. Zn(2+)-binding residues include Glu-183, His-246, and His-262.

This sequence belongs to the sugar phosphate cyclases superfamily. Dehydroquinate synthase family. Requires Co(2+) as cofactor. Zn(2+) is required as a cofactor. The cofactor is NAD(+).

The protein localises to the cytoplasm. The enzyme catalyses 7-phospho-2-dehydro-3-deoxy-D-arabino-heptonate = 3-dehydroquinate + phosphate. Its pathway is metabolic intermediate biosynthesis; chorismate biosynthesis; chorismate from D-erythrose 4-phosphate and phosphoenolpyruvate: step 2/7. Functionally, catalyzes the conversion of 3-deoxy-D-arabino-heptulosonate 7-phosphate (DAHP) to dehydroquinate (DHQ). This is 3-dehydroquinate synthase from Saccharopolyspora erythraea (strain ATCC 11635 / DSM 40517 / JCM 4748 / NBRC 13426 / NCIMB 8594 / NRRL 2338).